A 245-amino-acid polypeptide reads, in one-letter code: Probable phosphatase PC1_1798 (245 aa).

Positions 7, 9, 15, 40, 73, 101, 131, 192, and 194 each coordinate Zn(2+).

The protein belongs to the PHP family. Homotrimer. The cofactor is Zn(2+).

This is Probable phosphatase PC1_1798 from Pectobacterium carotovorum subsp. carotovorum (strain PC1).